We begin with the raw amino-acid sequence, 173 residues long: Nicotinamide-nucleotide adenylyltransferase (173 aa).

This sequence belongs to the archaeal NMN adenylyltransferase family.

Its subcellular location is the cytoplasm. The catalysed reaction is beta-nicotinamide D-ribonucleotide + ATP + H(+) = diphosphate + NAD(+). Its pathway is cofactor biosynthesis; NAD(+) biosynthesis; NAD(+) from nicotinamide D-ribonucleotide: step 1/1. The protein is Nicotinamide-nucleotide adenylyltransferase of Methanosarcina barkeri (strain Fusaro / DSM 804).